A 161-amino-acid polypeptide reads, in one-letter code: Probable metalloprotease HVO_1016 (161 aa).

Residues 10–131 form the MPN domain; the sequence is VGIAADALDF…WEAFDQSGEV (122 aa). The Proton donor/acceptor role is filled by glutamate 31. Residues histidine 87, histidine 89, and aspartate 100 each coordinate Zn(2+). The JAMM motif motif lies at 87–100; it reads HSHPNGVLRPSDAD.

This sequence belongs to the peptidase M67B family. As to quaternary structure, monomer and homodimer. Zn(2+) is required as a cofactor.

Its function is as follows. Probable metalloprotease. Does not hydrolyze SAMP1- and SAMP2-protein conjugates, diglycine-AMC, Ub-AMC, hemoglobin, cytochrome c, carbonic anhydrase, creatinine phosphokinase, beta-amylase and bovine serum albumin. The chain is Probable metalloprotease HVO_1016 from Haloferax volcanii (strain ATCC 29605 / DSM 3757 / JCM 8879 / NBRC 14742 / NCIMB 2012 / VKM B-1768 / DS2) (Halobacterium volcanii).